The primary structure comprises 97 residues: Plastocyanin A/B (97 aa).

One can recognise a Plastocyanin-like domain in the interval 1 to 97 (AEVKLGSDDG…AGMKGEVTVN (97 aa)). Cu cation-binding residues include histidine 37, cysteine 82, histidine 85, and methionine 90.

It belongs to the plastocyanin family. It depends on Cu(2+) as a cofactor.

It is found in the plastid. Its subcellular location is the chloroplast thylakoid membrane. In terms of biological role, participates in electron transfer between P700 and the cytochrome b6-f complex in photosystem I. The protein is Plastocyanin A/B (PETE) of Petroselinum crispum (Parsley).